Consider the following 542-residue polypeptide: Putative selenium-binding protein (542 aa).

It belongs to the selenium-binding protein family.

The polypeptide is Putative selenium-binding protein (Caenorhabditis elegans).